We begin with the raw amino-acid sequence, 253 residues long: Solute carrier family 66 member 2 (253 aa).

The next 6 membrane-spanning stretches (helical) occupy residues 7–27 (GWLLVPLHQLVSWGAAGAMVF), 49–69 (FSTYVCLVLLVANILRILFWF), 72–92 (HFESPLLWQSVVMILTMLLML), 125–145 (FADYVQCVLAFTGVAGYITYL), 150–170 (ALFVETLGFLAVLTEAMLGVP), and 214–234 (VCGLLQVLVDLAILGQAYVFT). Positions 14–80 (HQLVSWGAAG…RHFESPLLWQ (67 aa)) constitute a PQ-loop 1 domain. The PQ-loop 2 domain maps to 160–215 (AVLTEAMLGVPQLYRNHRHQSTEGMSIKMVLMWTSGDTFKTAYFLLNGAPLQFSVC).

The protein resides in the membrane. The sequence is that of Solute carrier family 66 member 2 (SLC66A2) from Bos taurus (Bovine).